Reading from the N-terminus, the 478-residue chain is Methionine aminopeptidase 2 (478 aa).

The interval 1–123 is disordered; sequence MAGVEEASSF…DPPSVPICDL (123 aa). A2 is subject to N-acetylalanine. Over residues 36-46 the composition is skewed to basic residues; it reads KKKRRKKKKGK. Basic and acidic residues predominate over residues 55-79; that stretch reads ELDKESGTSVDEVAKQLERQALEEK. Residues S60 and S63 each carry the phosphoserine; alternate modification. Residues S60 and S63 are each glycosylated (O-linked (GlcNAc) serine; alternate). Residues 80 to 92 show a composition bias toward acidic residues; sequence EKDDDDEDGDGDG. A compositionally biased stretch (basic residues) spans 97-109; sequence GKKKKKKKKKRGP. H231 provides a ligand contact to substrate. Positions 251, 262, and 331 each coordinate a divalent metal cation. H339 serves as a coordination point for substrate. Positions 364 and 459 each coordinate a divalent metal cation.

The protein belongs to the peptidase M24A family. Methionine aminopeptidase eukaryotic type 2 subfamily. Binds EIF2S1 at low magnesium concentrations. Interacts strongly with the eIF-2 gamma-subunit EIF2S3. It depends on Co(2+) as a cofactor. Zn(2+) is required as a cofactor. Mn(2+) serves as cofactor. Requires Fe(2+) as cofactor. In terms of processing, O-glycosylated; contains 12 O-linked GlcNAc. Post-translationally, contains approximately 12 O-linked N-acetylglucosamine (GlcNAc) residues. O-glycosylation is required for EIF2S1 binding.

It is found in the cytoplasm. The enzyme catalyses Release of N-terminal amino acids, preferentially methionine, from peptides and arylamides.. Cotranslationally removes the N-terminal methionine from nascent proteins. The N-terminal methionine is often cleaved when the second residue in the primary sequence is small and uncharged (Met-Ala-, Cys, Gly, Pro, Ser, Thr, or Val). Functionally, protects eukaryotic initiation factor EIF2S1 from translation-inhibiting phosphorylation by inhibitory kinases such as EIF2AK2/PKR and EIF2AK1/HCR. Plays a critical role in the regulation of protein synthesis. This is Methionine aminopeptidase 2 (Metap2) from Rattus norvegicus (Rat).